Reading from the N-terminus, the 354-residue chain is Decorin (354 aa).

Residues 1-16 (MKATLVLFLLAQVSWA) form the signal peptide. The propeptide occupies 17–30 (GPFEQRGLFDFMLE). Residue serine 34 is glycosylated (O-linked (Xyl...) (glycosaminoglycan) serine). 2 cysteine pairs are disulfide-bonded: cysteine 49–cysteine 55 and cysteine 53–cysteine 62. 12 LRR repeats span residues 68 to 88 (DKVP…NNKI), 89 to 112 (TEIK…NNKI), 113 to 136 (SKIS…KNHL), 137 to 157 (KELP…DNEI), 158 to 181 (TKLK…GNPL), 182 to 207 (KNSG…DTNI), 208 to 228 (TAIP…GNKI), 229 to 252 (AKVD…FNSI), 253 to 276 (TVVE…NNKL), 277 to 299 (LRVP…NNNI), 300 to 329 (SEVG…SNPV), and 330 to 354 (RYWQ…GNYK). N-linked (GlcNAc...) asparagine glycosylation is present at asparagine 206. Residues asparagine 241, asparagine 257, and asparagine 298 are each glycosylated (N-linked (GlcNAc...) asparagine). Cysteines 308 and 341 form a disulfide.

The protein belongs to the small leucine-rich proteoglycan (SLRP) family. SLRP class I subfamily. Binds to type I and type II collagen, fibronectin and TGF-beta. Forms a ternary complex with MFAP2 and ELN. Interacts with DPT. The attached glycosaminoglycan chain can be either chondroitin sulfate or dermatan sulfate depending upon the tissue of origin.

The protein localises to the secreted. It is found in the extracellular space. It localises to the extracellular matrix. Functionally, may affect the rate of fibrils formation. May be implicated in the dilatation of the rat cervix. The protein is Decorin (Dcn) of Rattus norvegicus (Rat).